The following is a 332-amino-acid chain: Glycerol-3-phosphate dehydrogenase [NAD(P)+] (332 aa).

Positions 13, 34, and 108 each coordinate NADPH. Sn-glycerol 3-phosphate-binding residues include lysine 108, glycine 136, and serine 138. Residue alanine 140 coordinates NADPH. Residues lysine 191, aspartate 244, serine 254, arginine 255, and asparagine 256 each contribute to the sn-glycerol 3-phosphate site. Residue lysine 191 is the Proton acceptor of the active site. Arginine 255 serves as a coordination point for NADPH. Residues valine 279 and glutamate 281 each contribute to the NADPH site.

This sequence belongs to the NAD-dependent glycerol-3-phosphate dehydrogenase family.

The protein resides in the cytoplasm. It carries out the reaction sn-glycerol 3-phosphate + NAD(+) = dihydroxyacetone phosphate + NADH + H(+). It catalyses the reaction sn-glycerol 3-phosphate + NADP(+) = dihydroxyacetone phosphate + NADPH + H(+). The protein operates within membrane lipid metabolism; glycerophospholipid metabolism. In terms of biological role, catalyzes the reduction of the glycolytic intermediate dihydroxyacetone phosphate (DHAP) to sn-glycerol 3-phosphate (G3P), the key precursor for phospholipid synthesis. This Francisella tularensis subsp. mediasiatica (strain FSC147) protein is Glycerol-3-phosphate dehydrogenase [NAD(P)+].